The following is a 187-amino-acid chain: UPF0301 protein PC1_3712 (187 aa).

It belongs to the UPF0301 (AlgH) family.

The polypeptide is UPF0301 protein PC1_3712 (Pectobacterium carotovorum subsp. carotovorum (strain PC1)).